Here is a 309-residue protein sequence, read N- to C-terminus: Tagatose-6-phosphate kinase (309 aa).

It belongs to the carbohydrate kinase PfkB family. LacC subfamily.

The catalysed reaction is D-tagatofuranose 6-phosphate + ATP = D-tagatofuranose 1,6-bisphosphate + ADP + H(+). It participates in carbohydrate metabolism; D-tagatose 6-phosphate degradation; D-glyceraldehyde 3-phosphate and glycerone phosphate from D-tagatose 6-phosphate: step 1/2. The chain is Tagatose-6-phosphate kinase from Streptococcus pyogenes serotype M6 (strain ATCC BAA-946 / MGAS10394).